The primary structure comprises 66 residues: Large ribosomal subunit protein uL30 (66 aa).

This sequence belongs to the universal ribosomal protein uL30 family. As to quaternary structure, part of the 50S ribosomal subunit.

This chain is Large ribosomal subunit protein uL30, found in Chelativorans sp. (strain BNC1).